The sequence spans 469 residues: UDP-N-acetylmuramoylalanine--D-glutamate ligase (469 aa).

121 to 127 (GTNGKST) serves as a coordination point for ATP.

This sequence belongs to the MurCDEF family.

Its subcellular location is the cytoplasm. It carries out the reaction UDP-N-acetyl-alpha-D-muramoyl-L-alanine + D-glutamate + ATP = UDP-N-acetyl-alpha-D-muramoyl-L-alanyl-D-glutamate + ADP + phosphate + H(+). Its pathway is cell wall biogenesis; peptidoglycan biosynthesis. Its function is as follows. Cell wall formation. Catalyzes the addition of glutamate to the nucleotide precursor UDP-N-acetylmuramoyl-L-alanine (UMA). The polypeptide is UDP-N-acetylmuramoylalanine--D-glutamate ligase (Agrobacterium fabrum (strain C58 / ATCC 33970) (Agrobacterium tumefaciens (strain C58))).